A 292-amino-acid chain; its full sequence is Zinc finger protein OZF (292 aa).

10 consecutive C2H2-type zinc fingers follow at residues 16 to 38, 44 to 66, 72 to 94, 100 to 122, 128 to 150, 156 to 178, 184 to 206, 212 to 234, 240 to 262, and 268 to 290; these read FACKVCGKLFSHKSNLTEHEHFH, FECNECGKAFSQKQYVIKHQSTH, FECSDCGKAFSQKENLLTHQKIH, FECKDCGKAFIQKSNLIRHQRTH, FICKECGKTFSGKSNLTEHEKIH, FKCNECGTAFGQKKYLIKHQNIH, YECNECGKAFSQRTSLIVHVRIH, YECNVCGKAFSQSSSLTVHVRSH, YGCNECGKAFSQFSTLALHLRIH, and YQCSECGKAFSQKSHHIRHQKIH. Glycyl lysine isopeptide (Lys-Gly) (interchain with G-Cter in SUMO2) cross-links involve residues Lys-28, Lys-51, and Lys-56. Glycyl lysine isopeptide (Lys-Gly) (interchain with G-Cter in SUMO) cross-links involve residues Lys-157 and Lys-169. Residue Lys-173 forms a Glycyl lysine isopeptide (Lys-Gly) (interchain with G-Cter in SUMO2) linkage. The interval 212–292 is interaction with TERF2IP; that stretch reads YECNVCGKAF…HIRHQKIHTH (81 aa).

The protein belongs to the krueppel C2H2-type zinc-finger protein family. Binds DNA. Interacts with SUMO conjugating enzyme UBC9/UBE2I. Interacts with the telomeric protein TERF2IP. As to expression, expressed in heart, brain, liver, lung, skeletal muscle and kidney, and at much lower level in spleen and testicle. Expressed in lactating mammary gland.

The protein localises to the nucleus. The polypeptide is Zinc finger protein OZF (Znf146) (Mus musculus (Mouse)).